A 295-amino-acid polypeptide reads, in one-letter code: GATA transcription factor 18 (295 aa).

A GATA-type zinc finger spans residues 148–202 (SLLARRCANCDTTSTPLWRNGPRGPKSLCNACGIRFKKEERRTTAATGNTVVGAA).

Belongs to the type IV zinc-finger family. Class B subfamily. Homodimer. Forms heterodimers with GATA19, GATA22 and GATA21. Interacts with JAG. Binds to AGO10/PNH. In terms of tissue distribution, expressed in vegetative and inflorescence shoot apical meristems (SAMs), axillary (SAMs), floral meristems, developing ovules and stamens, vascular tissues, and in the embryo.

Its subcellular location is the nucleus. Its function is as follows. Transcriptional factor that specifically binds 5'-GATA-3' or 5'-GAT-3' motifs within gene promoters (including its own promoter and GATA21 promoter), thus regulating the expression of genes mostly involved in hormone responses and floral organ specification (including genes regulating hormones responses). Regulates both flower and shoot apical meristem (SAM) development, especially for establishing organ boundaries in shoots and flowers, probably by controlling the number and position of WUS-expressing cells. Coregulates, with AGO10/PNH, the shoot apical meristem (SAM) organization. Regulates floral organ development via the promotion of JAG and NPR5/BOP2 expression. Modulates cytokinin homeostasis in organ boundaries by regulating CKX3 expression. Involved in cell proliferation and differentiation. Required to position the inductive proembryo boundary via the regulation of gene expression and for early embryonic development. Together with GIF1/AN3, mediates cotyledon identity by preventing ectopic root formation through the repression of PLT1 expression. This is GATA transcription factor 18 from Arabidopsis thaliana (Mouse-ear cress).